The primary structure comprises 341 residues: Ribosomal RNA small subunit methyltransferase C (341 aa).

The protein belongs to the methyltransferase superfamily. RsmC family. As to quaternary structure, monomer.

It is found in the cytoplasm. The catalysed reaction is guanosine(1207) in 16S rRNA + S-adenosyl-L-methionine = N(2)-methylguanosine(1207) in 16S rRNA + S-adenosyl-L-homocysteine + H(+). Functionally, specifically methylates the guanine in position 1207 of 16S rRNA in the 30S particle. The protein is Ribosomal RNA small subunit methyltransferase C of Shewanella pealeana (strain ATCC 700345 / ANG-SQ1).